Reading from the N-terminus, the 103-residue chain is Pyrimidine/purine nucleoside phosphorylase (103 aa).

It belongs to the nucleoside phosphorylase PpnP family.

It carries out the reaction a purine D-ribonucleoside + phosphate = a purine nucleobase + alpha-D-ribose 1-phosphate. It catalyses the reaction adenosine + phosphate = alpha-D-ribose 1-phosphate + adenine. The enzyme catalyses cytidine + phosphate = cytosine + alpha-D-ribose 1-phosphate. The catalysed reaction is guanosine + phosphate = alpha-D-ribose 1-phosphate + guanine. It carries out the reaction inosine + phosphate = alpha-D-ribose 1-phosphate + hypoxanthine. It catalyses the reaction thymidine + phosphate = 2-deoxy-alpha-D-ribose 1-phosphate + thymine. The enzyme catalyses uridine + phosphate = alpha-D-ribose 1-phosphate + uracil. The catalysed reaction is xanthosine + phosphate = alpha-D-ribose 1-phosphate + xanthine. Catalyzes the phosphorolysis of diverse nucleosides, yielding D-ribose 1-phosphate and the respective free bases. Can use uridine, adenosine, guanosine, cytidine, thymidine, inosine and xanthosine as substrates. Also catalyzes the reverse reactions. In Chlorobium chlorochromatii (strain CaD3), this protein is Pyrimidine/purine nucleoside phosphorylase.